A 194-amino-acid chain; its full sequence is Imidazoleglycerol-phosphate dehydratase (194 aa).

Belongs to the imidazoleglycerol-phosphate dehydratase family.

It localises to the cytoplasm. It carries out the reaction D-erythro-1-(imidazol-4-yl)glycerol 3-phosphate = 3-(imidazol-4-yl)-2-oxopropyl phosphate + H2O. Its pathway is amino-acid biosynthesis; L-histidine biosynthesis; L-histidine from 5-phospho-alpha-D-ribose 1-diphosphate: step 6/9. This is Imidazoleglycerol-phosphate dehydratase from Listeria innocua serovar 6a (strain ATCC BAA-680 / CLIP 11262).